The following is a 215-amino-acid chain: Urease accessory protein UreG (215 aa).

A GTP-binding site is contributed by 24–31 (GPVGSGKT).

Belongs to the SIMIBI class G3E GTPase family. UreG subfamily. Homodimer. UreD, UreF and UreG form a complex that acts as a GTP-hydrolysis-dependent molecular chaperone, activating the urease apoprotein by helping to assemble the nickel containing metallocenter of UreC. The UreE protein probably delivers the nickel.

The protein localises to the cytoplasm. In terms of biological role, facilitates the functional incorporation of the urease nickel metallocenter. This process requires GTP hydrolysis, probably effectuated by UreG. This Burkholderia ambifaria (strain ATCC BAA-244 / DSM 16087 / CCUG 44356 / LMG 19182 / AMMD) (Burkholderia cepacia (strain AMMD)) protein is Urease accessory protein UreG.